The chain runs to 594 residues: UvrABC system protein C (594 aa).

The region spanning 14–91 is the GIY-YIG domain; the sequence is DQPGCYLMKD…IKKHDPKYNI (78 aa). In terms of domain architecture, UVR spans 196–231; the sequence is KEVRSELETKMYEASEKLEFERAKELRDQIAHIDAI.

It belongs to the UvrC family. As to quaternary structure, interacts with UvrB in an incision complex.

The protein resides in the cytoplasm. Its function is as follows. The UvrABC repair system catalyzes the recognition and processing of DNA lesions. UvrC both incises the 5' and 3' sides of the lesion. The N-terminal half is responsible for the 3' incision and the C-terminal half is responsible for the 5' incision. The polypeptide is UvrABC system protein C (Bacillus thuringiensis (strain Al Hakam)).